The sequence spans 743 residues: Probable TonB-dependent receptor BfrD (743 aa).

A signal peptide spans Met1–Ala30. Residues Pro62 to Lys168 enclose the TBDR plug domain. The 571-residue stretch at Gln173–Tyr743 folds into the TBDR beta-barrel domain. Positions Tyr726–Tyr743 match the TonB C-terminal box motif.

Belongs to the TonB-dependent receptor family.

The protein localises to the cell outer membrane. Functionally, probably involved in iron transport. In Bordetella pertussis (strain Tohama I / ATCC BAA-589 / NCTC 13251), this protein is Probable TonB-dependent receptor BfrD (bfrD).